The sequence spans 235 residues: Small ribosomal subunit protein uS2c (235 aa).

It belongs to the universal ribosomal protein uS2 family.

It is found in the plastid. The protein localises to the chloroplast. This chain is Small ribosomal subunit protein uS2c (rps2), found in Guillardia theta (Cryptophyte).